The chain runs to 200 residues: UPF0301 protein BruAb1_0502 (200 aa).

Belongs to the UPF0301 (AlgH) family.

The protein is UPF0301 protein BruAb1_0502 of Brucella abortus biovar 1 (strain 9-941).